A 295-amino-acid polypeptide reads, in one-letter code: Aquaporin NIP2-1 (295 aa).

2 helical membrane passes run 49–69 (VVSE…AAGI) and 83–103 (SVAG…ISGA). Positions 106-108 (NPA) match the NPA 1 motif. The next 3 membrane-spanning stretches (helical) occupy residues 124-146 (VPFY…KAVL), 164-184 (SLVI…AVAT), and 192-212 (LAGL…GAVS). The short motif at 217 to 219 (NPA) is the NPA 2 element. A helical transmembrane segment spans residues 230–250 (LYTGLWIYFLGPVLGTLSGAW).

This sequence belongs to the MIP/aquaporin (TC 1.A.8) family. NIP (TC 1.A.8.12) subfamily.

The protein resides in the membrane. Its function is as follows. Aquaporins facilitate the transport of water and small neutral solutes across cell membranes. The polypeptide is Aquaporin NIP2-1 (NIP2-1) (Zea mays (Maize)).